The sequence spans 513 residues: Mannosyl-oligosaccharide alpha-1,2-mannosidase 1B (513 aa).

The first 21 residues, 1–21 (MHLPSLSLSLTALAIASPSAA), serve as a signal peptide directing secretion. Residues N97, N117, N150, N184, N251, N322, N348, and N368 are each glycosylated (N-linked (GlcNAc...) asparagine). A disulfide bridge links C334 with C363. The active-site Proton donor is E377. Residue T503 coordinates Ca(2+).

It belongs to the glycosyl hydrolase 47 family. In terms of assembly, monomer. The cofactor is Ca(2+). It depends on Mg(2+) as a cofactor.

It is found in the cytoplasmic vesicle lumen. The enzyme catalyses N(4)-(alpha-D-Man-(1-&gt;2)-alpha-D-Man-(1-&gt;2)-alpha-D-Man-(1-&gt;3)-[alpha-D-Man-(1-&gt;2)-alpha-D-Man-(1-&gt;3)-[alpha-D-Man-(1-&gt;2)-alpha-D-Man-(1-&gt;6)]-alpha-D-Man-(1-&gt;6)]-beta-D-Man-(1-&gt;4)-beta-D-GlcNAc-(1-&gt;4)-beta-D-GlcNAc)-L-asparaginyl-[protein] (N-glucan mannose isomer 9A1,2,3B1,2,3) + 4 H2O = N(4)-(alpha-D-Man-(1-&gt;3)-[alpha-D-Man-(1-&gt;3)-[alpha-D-Man-(1-&gt;6)]-alpha-D-Man-(1-&gt;6)]-beta-D-Man-(1-&gt;4)-beta-D-GlcNAc-(1-&gt;4)-beta-D-GlcNAc)-L-asparaginyl-[protein] (N-glucan mannose isomer 5A1,2) + 4 beta-D-mannose. The catalysed reaction is N(4)-(alpha-D-Man-(1-&gt;2)-alpha-D-Man-(1-&gt;2)-alpha-D-Man-(1-&gt;3)-[alpha-D-Man-(1-&gt;3)-[alpha-D-Man-(1-&gt;2)-alpha-D-Man-(1-&gt;6)]-alpha-D-Man-(1-&gt;6)]-beta-D-Man-(1-&gt;4)-beta-D-GlcNAc-(1-&gt;4)-beta-D-GlcNAc)-L-asparaginyl-[protein] (N-glucan mannose isomer 8A1,2,3B1,3) + 3 H2O = N(4)-(alpha-D-Man-(1-&gt;3)-[alpha-D-Man-(1-&gt;3)-[alpha-D-Man-(1-&gt;6)]-alpha-D-Man-(1-&gt;6)]-beta-D-Man-(1-&gt;4)-beta-D-GlcNAc-(1-&gt;4)-beta-D-GlcNAc)-L-asparaginyl-[protein] (N-glucan mannose isomer 5A1,2) + 3 beta-D-mannose. Its pathway is protein modification; protein glycosylation. Functionally, involved in the maturation of Asn-linked oligosaccharides. Progressively trims alpha-1,2-linked mannose residues from Man(9)GlcNAc(2) to produce Man(5)GlcNAc(2). This is Mannosyl-oligosaccharide alpha-1,2-mannosidase 1B (mns1B) from Aspergillus phoenicis (Aspergillus saitoi).